A 236-amino-acid polypeptide reads, in one-letter code: MMGIFLVYVGFVFFSVLYVQQGLSSQAKFTEFPRNVTATEGQNVEMSCAFQSGSASVYLEIQWWFLRGPEDLDPGAEGAGAQVELLPDRDPDSDGTKISTVKVQGNDISHKLQISKVRKKDEGLYECRVTDANYGELQEHKAQAYLKVNANSHARRMQAFEASPMWLQDMKPRKNVSAAIPSSIHGSANQRTHSTSSPQVVAKIPKQSPQSGARIATSHGLSVLLLVCGFVKGALL.

Positions 1 to 24 are cleaved as a signal peptide; it reads MMGIFLVYVGFVFFSVLYVQQGLS. Residues 27–143 enclose the Ig-like V-type domain; it reads AKFTEFPRNV…YGELQEHKAQ (117 aa). A glycan (N-linked (GlcNAc...) asparagine) is linked at asparagine 35. Cysteine 48 and cysteine 127 are oxidised to a cystine. Asparagine 175 carries an N-linked (GlcNAc...) asparagine glycan. Over residues 184 to 199 the composition is skewed to polar residues; it reads IHGSANQRTHSTSSPQ. Residues 184 to 206 are disordered; the sequence is IHGSANQRTHSTSSPQVVAKIPK.

In terms of assembly, homodimer. Post-translationally, N-glycosylated. N-linked glycosylation is critical for secretion but not for preadipocyte cell differentiation activity.

It localises to the secreted. Plays a role in the regulation of the early stage of white and brown preadipocyte cell differentiation. Promotes adipogenic commitment of preadipocytes by increasing gene expression of the transcription factor PPARG in a BMP4-dependent signaling pathway. The chain is V-set and transmembrane domain-containing protein 2A from Homo sapiens (Human).